We begin with the raw amino-acid sequence, 360 residues long: Peptide chain release factor 1 (360 aa).

Gln-237 bears the N5-methylglutamine mark.

It belongs to the prokaryotic/mitochondrial release factor family. Post-translationally, methylated by PrmC. Methylation increases the termination efficiency of RF1.

The protein localises to the cytoplasm. Its function is as follows. Peptide chain release factor 1 directs the termination of translation in response to the peptide chain termination codons UAG and UAA. This is Peptide chain release factor 1 from Pseudomonas entomophila (strain L48).